The following is a 329-amino-acid chain: GTP 3',8-cyclase (329 aa).

A Radical SAM core domain is found at 1–229; it reads MNPVDYLRIS…TAFVQGNGPA (229 aa). Arginine 8 contacts GTP. [4Fe-4S] cluster-binding residues include cysteine 15 and cysteine 19. Residue tyrosine 21 participates in S-adenosyl-L-methionine binding. Cysteine 22 provides a ligand contact to [4Fe-4S] cluster. Arginine 60 contacts GTP. S-adenosyl-L-methionine is bound at residue glycine 64. Threonine 91 is a GTP binding site. An S-adenosyl-L-methionine-binding site is contributed by serine 115. Lysine 155 serves as a coordination point for GTP. Methionine 189 provides a ligand contact to S-adenosyl-L-methionine. 2 residues coordinate [4Fe-4S] cluster: cysteine 252 and cysteine 255. 257-259 lines the GTP pocket; that stretch reads RMR. A [4Fe-4S] cluster-binding site is contributed by cysteine 269.

It belongs to the radical SAM superfamily. MoaA family. As to quaternary structure, monomer and homodimer. Requires [4Fe-4S] cluster as cofactor.

The catalysed reaction is GTP + AH2 + S-adenosyl-L-methionine = (8S)-3',8-cyclo-7,8-dihydroguanosine 5'-triphosphate + 5'-deoxyadenosine + L-methionine + A + H(+). It functions in the pathway cofactor biosynthesis; molybdopterin biosynthesis. Catalyzes the cyclization of GTP to (8S)-3',8-cyclo-7,8-dihydroguanosine 5'-triphosphate. This Picosynechococcus sp. (strain ATCC 27264 / PCC 7002 / PR-6) (Agmenellum quadruplicatum) protein is GTP 3',8-cyclase.